The following is a 193-amino-acid chain: Peptidyl-tRNA hydrolase (193 aa).

Tyr-17 serves as a coordination point for tRNA. His-22 functions as the Proton acceptor in the catalytic mechanism. Residues Tyr-69, Asn-71, and Asn-117 each coordinate tRNA.

Belongs to the PTH family. As to quaternary structure, monomer.

It is found in the cytoplasm. It carries out the reaction an N-acyl-L-alpha-aminoacyl-tRNA + H2O = an N-acyl-L-amino acid + a tRNA + H(+). Hydrolyzes ribosome-free peptidyl-tRNAs (with 1 or more amino acids incorporated), which drop off the ribosome during protein synthesis, or as a result of ribosome stalling. Functionally, catalyzes the release of premature peptidyl moieties from peptidyl-tRNA molecules trapped in stalled 50S ribosomal subunits, and thus maintains levels of free tRNAs and 50S ribosomes. This is Peptidyl-tRNA hydrolase from Leifsonia xyli subsp. xyli (strain CTCB07).